A 1032-amino-acid polypeptide reads, in one-letter code: Toll-like receptor 9 (1032 aa).

A signal peptide spans M1–A25. Residues L26–D818 are Extracellular-facing. A disulfide bond links C35 and C45. Residue W47–K51 participates in DNA binding. LRR repeat units follow at residues C62–H85, S87–C110, M122–N147, L150–L166, Y167–V190, L198–S221, E223–N242, L243–C268, L283–G306, V308–N332, L333–L356, L363–W386, L390–T413, R415–E440, C471–N495, S497–P520, L521–E544, P546–T573, L575–N599, V601–H623, L628–N651, P653–F676, L677–N700, T702–L724, A725–P748, and V750–D773. A glycan (N-linked (GlcNAc...) asparagine) is linked at N64. DNA is bound by residues S72–H77 and K95–S109. C98 and C110 are oxidised to a cystine. The N-linked (GlcNAc...) asparagine glycan is linked to N129. Y132 serves as a coordination point for DNA. N-linked (GlcNAc...) asparagine glycosylation is present at N147. A disulfide bond links C178 and C184. Y179–K181 is a DNA binding site. N-linked (GlcNAc...) asparagine glycosylation occurs at N200. DNA is bound at residue Y208. N210 and N242 each carry an N-linked (GlcNAc...) asparagine glycan. 2 disulfide bridges follow: C255/C268 and C258/C265. S-palmitoyl cysteine attachment occurs at residues C258 and C265. 4 N-linked (GlcNAc...) asparagine glycosylation sites follow: N300, N309, N332, and N340. A disordered region spans residues P430–P462. Residues T437 to L450 are compositionally biased toward acidic residues. Cysteines 471 and 501 form a disulfide. 2 N-linked (GlcNAc...) asparagine glycosylation sites follow: N495 and N514. N-linked (GlcNAc...) asparagine glycosylation occurs at N568. Residues N670, N695, and N700 are each glycosylated (N-linked (GlcNAc...) asparagine). N-linked (GlcNAc...) asparagine glycosylation is found at N732 and N752. Disulfide bonds link C765–C791 and C767–C810. Residues C819–L839 form a helical membrane-spanning segment. Topologically, residues C840 to E1032 are cytoplasmic. The TIR domain maps to L868–L1013.

The protein belongs to the Toll-like receptor family. In terms of assembly, monomer and homodimer. Exists as a monomer in the absence of unmethylated cytidine-phosphate-guanosine (CpG) ligand. Proteolytic processing of an insertion loop (Z-loop) is required for homodimerization upon binding to the unmethylated CpG ligand leading to its activation. Interacts with MYD88 via their respective TIR domains. Interacts with BTK. Interacts (via transmembrane domain) with UNC93B1. Interacts with CD300LH; the interaction may promote full activation of TLR9-triggered innate responses. Interacts with CNPY3 and HSP90B1; this interaction is required for proper folding in the endoplasmic reticulum. Interacts with SMPDL3B. Interacts with CD82; this interaction is essential for TLR9-dependent myddosome formation in response to CpG stimulation. Post-translationally, activated by proteolytic cleavage of the flexible loop between repeats LRR14 and LRR15 within the ectodomain. Cleavage requires UNC93B1. Proteolytically processed by first removing the majority of the ectodomain by either asparagine endopeptidase (AEP) or a cathepsin followed by a trimming event that is solely cathepsin mediated and required for optimal receptor signaling. In terms of processing, palmitoylated by ZDHHC3 in the Golgi regulates TLR9 trafficking from the Golgi to endosomes. Depalmitoylation by PPT1 controls the release of TLR9 from UNC93B1 in endosomes. Expressed in the basolateral region of gastric epithelial cells with high levels detected in antrum and body mucosa (at protein level). Detected in spleen and stomach at higher levels in C57BL/6 mice than BALB/C.

It is found in the endoplasmic reticulum membrane. The protein resides in the endosome. The protein localises to the lysosome. It localises to the cytoplasmic vesicle. Its subcellular location is the phagosome. Key component of innate and adaptive immunity. TLRs (Toll-like receptors) control host immune response against pathogens through recognition of molecular patterns specific to microorganisms. TLR9 is a nucleotide-sensing TLR which is activated by unmethylated cytidine-phosphate-guanosine (CpG) dinucleotides. Acts via MYD88 and TRAF6, leading to NF-kappa-B activation, cytokine secretion and the inflammatory response. Plays a role in defense against systemic mouse cytomegalovirus infection. Controls lymphocyte response to Helicobacter infection. Upon CpG stimulation, induces B-cell proliferation, activation, survival and antibody production. The chain is Toll-like receptor 9 (Tlr9) from Mus musculus (Mouse).